We begin with the raw amino-acid sequence, 134 residues long: Probable glycine cleavage system H protein (134 aa).

The 82-residue stretch at 29–110 (TVLVGITDYA…PYENWIAKLK (82 aa)) folds into the Lipoyl-binding domain. Position 70 is an N6-lipoyllysine (Lys70).

It belongs to the GcvH family. As to quaternary structure, the glycine cleavage system is composed of four proteins: P, T, L and H. (R)-lipoate is required as a cofactor.

The glycine cleavage system catalyzes the degradation of glycine. The H protein shuttles the methylamine group of glycine from the P protein to the T protein. In Thermococcus gammatolerans (strain DSM 15229 / JCM 11827 / EJ3), this protein is Probable glycine cleavage system H protein.